Consider the following 577-residue polypeptide: Arginine--tRNA ligase (577 aa).

Positions 122–132 match the 'HIGH' region motif; it reads PNVAKEMHVGH.

Belongs to the class-I aminoacyl-tRNA synthetase family. Monomer.

The protein localises to the cytoplasm. The enzyme catalyses tRNA(Arg) + L-arginine + ATP = L-arginyl-tRNA(Arg) + AMP + diphosphate. The sequence is that of Arginine--tRNA ligase from Salmonella arizonae (strain ATCC BAA-731 / CDC346-86 / RSK2980).